Consider the following 1437-residue polypeptide: IQ domain-containing protein N (1437 aa).

Residues 84 to 112 (SRAATVIQASWKGYRLRQKLISQMTAAKA) form the IQ 1 domain. Disordered stretches follow at residues 332–353 (TSPT…SLSN), 416–440 (SQAQ…KPSP), and 848–878 (STGS…QNPR). The span at 422–440 (TVSTSSKTSPSSPTVKPSP) shows a compositional bias: low complexity. Residues 861 to 878 (AQPQLHSHAPNKTMQNPR) are compositionally biased toward polar residues. 5 consecutive IQ domains span residues 1190–1216 (QAVV…QWAT), 1217–1239 (IIQA…RATT), 1240–1258 (IIQA…ARQV), 1361–1389 (QHRA…SAAK), and 1390–1413 (MVQA…LGTG).

In terms of assembly, interacts with calmodulin. As to expression, expressed in testis, in elongating spermatids (at protein level).

In terms of biological role, essential for spermiogenesis and fertilization. May be required for manchette assembly in elongating spermatids. This chain is IQ domain-containing protein N (Iqcn), found in Mus musculus (Mouse).